The sequence spans 335 residues: Heat-inducible transcription repressor HrcA (335 aa).

This sequence belongs to the HrcA family.

Functionally, negative regulator of class I heat shock genes (grpE-dnaK-dnaJ and groELS operons). Prevents heat-shock induction of these operons. The polypeptide is Heat-inducible transcription repressor HrcA (Mesomycoplasma hyopneumoniae (strain 232) (Mycoplasma hyopneumoniae)).